Reading from the N-terminus, the 87-residue chain is Large ribosomal subunit protein bL27 (87 aa).

The interval 1-26 (MAHKKGTGSTRNGRDSNSKRLGVKAY) is disordered.

It belongs to the bacterial ribosomal protein bL27 family.

This is Large ribosomal subunit protein bL27 from Prochlorococcus marinus (strain SARG / CCMP1375 / SS120).